We begin with the raw amino-acid sequence, 197 residues long: MFVSFEGIDGCGKSTQVNLLVNYLEEKGIPYIKVREPGGTHLGEKIRELLITQEMCARSELLLFLASRAQLVESVIKPALKNGKIVIADRFAHSSVAYQGCGRELGPETVKILNDFATDKTYPDIVFYIDVPVNVAMERMKNQHKDRIEKEGKEFWESIRNCYLKMAKENENFVIIDGTRTIEEIHREIVKVFNAYL.

Gly7–Ser14 serves as a coordination point for ATP.

It belongs to the thymidylate kinase family.

The catalysed reaction is dTMP + ATP = dTDP + ADP. Phosphorylation of dTMP to form dTDP in both de novo and salvage pathways of dTTP synthesis. This is Thymidylate kinase from Fervidobacterium nodosum (strain ATCC 35602 / DSM 5306 / Rt17-B1).